A 300-amino-acid polypeptide reads, in one-letter code: N-acetylmuramic acid 6-phosphate etherase 1 (300 aa).

An SIS domain is found at 59–222 (AAERFKKGGR…STGIMVKVGN (164 aa)). E87 functions as the Proton donor in the catalytic mechanism. E118 is an active-site residue.

This sequence belongs to the GCKR-like family. MurNAc-6-P etherase subfamily. Homodimer.

The catalysed reaction is N-acetyl-D-muramate 6-phosphate + H2O = N-acetyl-D-glucosamine 6-phosphate + (R)-lactate. It functions in the pathway amino-sugar metabolism; N-acetylmuramate degradation. Functionally, specifically catalyzes the cleavage of the D-lactyl ether substituent of MurNAc 6-phosphate, producing GlcNAc 6-phosphate and D-lactate. In Enterococcus faecalis (strain ATCC 700802 / V583), this protein is N-acetylmuramic acid 6-phosphate etherase 1.